The following is a 76-amino-acid chain: MRSAMVVLVLVAMVAVFTRAQELKYPEREVVAELAAQIYGWPGSLGTMAGGPHKRNSELINSILGLPKVMNEAGRR.

The signal sequence occupies residues 1–20 (MRSAMVVLVLVAMVAVFTRA). At alanine 73 the chain carries Alanine amide.

This sequence belongs to the arthropod PDH family. Optical ganglia of the eyestalk.

The protein localises to the secreted. In terms of biological role, the pigment-dispersing hormone causes the migration of the distal retinal pigment into the proximal end of the pigment chromatophore cells and thus decreases the amount of light entering the retinulas. May also function as a neurotransmitter and/or neuromodulator. This is Pigment-dispersing hormone A peptides from Faxonius limosus (Spinycheek crayfish).